Reading from the N-terminus, the 84-residue chain is Cell division topological specificity factor (84 aa).

This sequence belongs to the MinE family.

Its function is as follows. Prevents the cell division inhibition by proteins MinC and MinD at internal division sites while permitting inhibition at polar sites. This ensures cell division at the proper site by restricting the formation of a division septum at the midpoint of the long axis of the cell. This is Cell division topological specificity factor from Pseudomonas fluorescens (strain SBW25).